A 212-amino-acid chain; its full sequence is Pyridoxine/pyridoxamine 5'-phosphate oxidase (212 aa).

Substrate is bound by residues Arg8 to Tyr11 and Lys66. FMN is bound by residues Arg61–Lys66, Phe76–Thr77, Arg82, Lys83, and Gln105. Positions 123, 127, and 131 each coordinate substrate. FMN contacts are provided by residues Gln140 to Ser141 and Trp185. Position 191-193 (Arg191–His193) interacts with substrate. Arg195 contributes to the FMN binding site.

Belongs to the pyridoxamine 5'-phosphate oxidase family. As to quaternary structure, homodimer. Requires FMN as cofactor.

The enzyme catalyses pyridoxamine 5'-phosphate + O2 + H2O = pyridoxal 5'-phosphate + H2O2 + NH4(+). It carries out the reaction pyridoxine 5'-phosphate + O2 = pyridoxal 5'-phosphate + H2O2. Its pathway is cofactor metabolism; pyridoxal 5'-phosphate salvage; pyridoxal 5'-phosphate from pyridoxamine 5'-phosphate: step 1/1. The protein operates within cofactor metabolism; pyridoxal 5'-phosphate salvage; pyridoxal 5'-phosphate from pyridoxine 5'-phosphate: step 1/1. In terms of biological role, catalyzes the oxidation of either pyridoxine 5'-phosphate (PNP) or pyridoxamine 5'-phosphate (PMP) into pyridoxal 5'-phosphate (PLP). In Shewanella baltica (strain OS223), this protein is Pyridoxine/pyridoxamine 5'-phosphate oxidase.